A 575-amino-acid polypeptide reads, in one-letter code: Epsin-1 (575 aa).

Residues K11, R25, N30, R63, and H73 each contribute to the a 1,2-diacyl-sn-glycero-3-phospho-(1D-myo-inositol-4,5-bisphosphate) site. Residues 12 to 144 (NIVHNYSEAE…RDEDRLREER (133 aa)) form the ENTH domain. A disordered region spans residues 150–186 (TKEKLAQTATASSAAVGSGPPPEAEQAWPQSSGEEEL). Positions 157–167 (TATASSAAVGS) are enriched in low complexity. UIM domains are found at residues 183–202 (EEEL…ADQP), 208–227 (EDDV…HDKE), and 233–252 (GDDL…TGGK). The interval 264 to 575 (FTTPAPPQAS…PAPNTNPFLL (312 aa)) is disordered. 8 tandem repeats follow at residues 274–276 (DPW), 294–296 (DPW), 306–308 (DPW), 319–321 (DPW), 332–334 (DPW), 349–351 (DPW), 367–369 (DPW), and 377–379 (DPW). Residues 274–379 (DPWGGPASVP…APAPAFSDPW (106 aa)) are 8 X 3 AA repeats of D-P-W. Composition is skewed to low complexity over residues 279–299 (PASV…WGGP) and 306–316 (DPWGGAAPTPA). The segment covering 332 to 346 (DPWGGTPAPAAGEGP) has biased composition (low complexity). The span at 367-379 (DPWAPAPAFSDPW) shows a compositional bias: low complexity. A Phosphoserine modification is found at S382. The [DE]-X(1,2)-F-X-X-[FL]-X-X-X-R motif motif lies at 401–410 (DEFSDFDRLR). 2 positions are modified to phosphoserine: S418 and S419. T420 is modified (phosphothreonine). Phosphoserine occurs at positions 434, 446, and 453. The span at 453-467 (SPPPAATPTPTPPTR) shows a compositional bias: pro residues. Phosphothreonine occurs at positions 459, 463, and 469. At S472 the chain carries Phosphoserine. Residue T493 is modified to Phosphothreonine. 2 consecutive repeat copies span residues 501 to 503 (NPF) and 517 to 519 (NPF). A 3 X 3 AA repeats of N-P-F region spans residues 501 to 573 (NPFLPSGAPP…GPPAPNTNPF (73 aa)). An Omega-N-methylarginine modification is found at R533. Residues 556 to 569 (GLPPMMPPGPPAPN) show a composition bias toward pro residues. Repeat unit 3 spans residues 571–573 (NPF).

The protein belongs to the epsin family. Monomer. Binds clathrin and ZBTB16/ZNF145. Binds ubiquitinated proteins. Interacts with RALBP1 in a complex also containing NUMB and TFAP2A during interphase and mitosis. Interacts with AP2B1. Interacts with UBQLN2. Interacts with ITSN1. Interacts with AP2A1 and AP2A2. Interacts with REPS2; the interaction is direct. Interacts with EPS15; the interaction is direct. Interacts with ENTREP1. Post-translationally, phosphorylated on serine and/or threonine residues in mitotic cells. Phosphorylation reduces interaction with REPS2, AP-2 and the membrane fraction. Depolarization of synaptosomes results in dephosphorylation. In terms of processing, ubiquitinated.

Its subcellular location is the cytoplasm. The protein localises to the cell membrane. It localises to the nucleus. It is found in the membrane. The protein resides in the clathrin-coated pit. In terms of biological role, binds to membranes enriched in phosphatidylinositol 4,5-bisphosphate (PtdIns(4,5)P2). Modifies membrane curvature and facilitates the formation of clathrin-coated invaginations. Regulates receptor-mediated endocytosis. The sequence is that of Epsin-1 (Epn1) from Mus musculus (Mouse).